A 125-amino-acid polypeptide reads, in one-letter code: Small ribosomal subunit protein uS12 (125 aa).

D89 carries the post-translational modification 3-methylthioaspartic acid. The disordered stretch occupies residues 104-125; the sequence is TAGVKDRSQSRSKYGAKASKQD.

Belongs to the universal ribosomal protein uS12 family. Part of the 30S ribosomal subunit. Contacts proteins S8 and S17. May interact with IF1 in the 30S initiation complex.

Functionally, with S4 and S5 plays an important role in translational accuracy. Its function is as follows. Interacts with and stabilizes bases of the 16S rRNA that are involved in tRNA selection in the A site and with the mRNA backbone. Located at the interface of the 30S and 50S subunits, it traverses the body of the 30S subunit contacting proteins on the other side and probably holding the rRNA structure together. The combined cluster of proteins S8, S12 and S17 appears to hold together the shoulder and platform of the 30S subunit. The protein is Small ribosomal subunit protein uS12 of Prochlorococcus marinus (strain MIT 9303).